The primary structure comprises 108 residues: Evasin P1127 (108 aa).

Residues 1–28 form the signal peptide; that stretch reads MEAKTFAFLEIAMFIALGIQTFVAVTDA. Disulfide bonds link Cys41–Cys63, Cys45–Cys65, and Cys56–Cys76. Asn44 carries an N-linked (GlcNAc...) asparagine glycan. Residue Asn89 is glycosylated (N-linked (GlcNAc...) asparagine).

It is found in the secreted. In terms of biological role, salivary chemokine-binding protein which binds to host chemokines CXCL1, CXCL2, CXCL3, CXCL5 and CXCL8. This Ixodes ricinus (Common tick) protein is Evasin P1127.